We begin with the raw amino-acid sequence, 170 residues long: Extracellular globin-3 (170 aa).

The signal sequence occupies residues 1-17 (MLRQLLVLVGLAVVCLA). A Globin domain is found at 23-169 (CCSEEDHRIV…ILTKISSRLN (147 aa)). Cys24 and Cys156 form a disulfide bridge. His119 lines the heme b pocket.

The protein belongs to the globin family. As to quaternary structure, the extracellular hemoglobin of the earthworm consists of 12 subunits that have a hexagonal bilayer structure with a molecular weight near 3.8 million. Each one-twelfth subunit is composed primarily of disulfide linked trimers (chains A, B, and C) and monomers (chain D).

Its subcellular location is the secreted. The chain is Extracellular globin-3 from Lumbricus terrestris (Common earthworm).